The following is a 207-amino-acid chain: ATP synthase subunit a (207 aa).

Transmembrane regions (helical) follow at residues 3–23 (QHVIMALTVLIVVPVIFTIFA), 62–82 (LIASIGLFVFFGNLLGIIPGL), 88–108 (NLNTTMALALLVFFIYNFEGI), 119–139 (FLGPVPAMAPVFVIIELLSHL), 158–178 (LISVVLIMLVPFLIPMPVMLI), and 180–200 (LIAVFLQTYVFVVLTTVYIAG).

It belongs to the ATPase A chain family. In terms of assembly, F-type ATPases have 2 components, CF(1) - the catalytic core - and CF(0) - the membrane proton channel. CF(1) has five subunits: alpha(3), beta(3), gamma(1), delta(1), epsilon(1). CF(0) has three main subunits: a(1), b(2) and c(9-12). The alpha and beta chains form an alternating ring which encloses part of the gamma chain. CF(1) is attached to CF(0) by a central stalk formed by the gamma and epsilon chains, while a peripheral stalk is formed by the delta and b chains.

The protein resides in the cell inner membrane. In terms of biological role, key component of the proton channel; it plays a direct role in the translocation of protons across the membrane. In Sulfurihydrogenibium sp. (strain YO3AOP1), this protein is ATP synthase subunit a.